A 156-amino-acid chain; its full sequence is Transcription elongation factor GreA (156 aa).

The stretch at 46–66 (AEYHAAREKQSFVEGRIKELE) forms a coiled coil.

This sequence belongs to the GreA/GreB family.

In terms of biological role, necessary for efficient RNA polymerase transcription elongation past template-encoded arresting sites. The arresting sites in DNA have the property of trapping a certain fraction of elongating RNA polymerases that pass through, resulting in locked ternary complexes. Cleavage of the nascent transcript by cleavage factors such as GreA or GreB allows the resumption of elongation from the new 3'terminus. GreA releases sequences of 2 to 3 nucleotides. This Paracoccus denitrificans (strain Pd 1222) protein is Transcription elongation factor GreA.